A 123-amino-acid chain; its full sequence is MPRSSRQQAGREAEAFALQFLQRQGLHLIEQNWLCKRGELDLVMLDGDTVVFVEVRYRRHSGWGGATESVDFRKQAKLVTAAQLFLQQATDWASHPCRFDVIAIEGQPGNAAPLNWIKSAFDS.

This sequence belongs to the UPF0102 family.

This Pseudomonas savastanoi pv. phaseolicola (strain 1448A / Race 6) (Pseudomonas syringae pv. phaseolicola (strain 1448A / Race 6)) protein is UPF0102 protein PSPPH_4120.